A 65-amino-acid chain; its full sequence is Neuropeptide-like protein 28 (65 aa).

Positions 1 to 22 are cleaved as a signal peptide; it reads MISTSSILILVFLLACFMATSA. A tyrosine amide mark is found at Y29, Y39, Y47, and Y55. Position 63 is a tryptophan amide (W63).

Belongs to the YARP (YGGW-amide related peptide) family.

It is found in the secreted. In terms of biological role, may have antimicrobial activity. In Caenorhabditis elegans, this protein is Neuropeptide-like protein 28 (nlp-28).